The chain runs to 876 residues: MSTERYNPRDAEPRWQEKWSEAKIFETDNNDPREKYYVLEMFPYPSGRIHIGHVRNYAMGDVVARYKRARGYNVLHPMGWDAFGMPAENAAMQNKVHPKDWTYQNIASMRAQLKSMGLSLDWSREFATCDVEYYQRQQYLFLDMMEKGLVYRKQSKVNWDPVDQTVLANEQVIDGRGWRSGALVEQRELTQWFFKITDFAQDLLDALDTLDHWPEKVRLMQKNWIGRSEGLAIRWEIAAGTGPQGFTDVQVYTTRPDTLFGASFLAIAADHPLAKALSETSSDIAAFCDECRRAGTSLAALETAEKKGLDTGIKVKHPLDPAWELPVYIANFVLMDYGTGAIFACPSGDQRDLDFARKYGLPVVPVVMPRDGDAASFTVGDTAYDGDGVMINSRFLDGLTTQEAFDVVAGKLTAAQLGNEPVAERRVNFRLRDWGVSRQRYWGCPIPVIHCDDCGVVPVPKQDLPVKLPDDVTFDVPGNPLDRHPTWRNVSCPCCGKAARRETDTMDTFVDSSWYYTRFTAPWEDKPTDPAVANHWLPVDQYIGGIEHAILHLLYSRFFTRAMRETGHVAVSEPFKGLFTQGMVVHETYRLGSGANGQWVAPADIRVEDVDGARRAFLLSSGEEVTIGSVEKMSKSKKNVIDPDDILGSYGADTARFFVLSDSPPDRDVIWSEAGIEGSHRFVQRLWRLVSEAADVLRTSASTPAKDGAGRAVSQAAHKTLQAVGADLDKLAFNKAVARIYELLNTLAAPLTQVASGNADTSFVAAVRNATEILIQIIAPMMPHLAEECWAVLGHSGMVSQADWPVFHAELVAENEVVMPVQINGKKKAELTIGRDADQNAVSQAVLDLDAVKAALQGQTPKKIIVVPQRIVNIVV.

A 'HIGH' region motif is present at residues 43 to 53 (PYPSGRIHIGH). Residues 632-636 (KMSKS) carry the 'KMSKS' region motif. K635 is a binding site for ATP.

This sequence belongs to the class-I aminoacyl-tRNA synthetase family.

Its subcellular location is the cytoplasm. It catalyses the reaction tRNA(Leu) + L-leucine + ATP = L-leucyl-tRNA(Leu) + AMP + diphosphate. The chain is Leucine--tRNA ligase from Allorhizobium ampelinum (strain ATCC BAA-846 / DSM 112012 / S4) (Agrobacterium vitis (strain S4)).